The chain runs to 117 residues: NADH-ubiquinone oxidoreductase chain 3 (117 aa).

The next 3 membrane-spanning stretches (helical) occupy residues 1-21, 56-76, and 86-106; these read MLSLTYIVGIASALVIILLLV, FFLVAILFLLFDLEIALILPY, and TFYNYWLVMLLVVVLTFGLMY.

The protein belongs to the complex I subunit 3 family.

Its subcellular location is the mitochondrion membrane. The catalysed reaction is a ubiquinone + NADH + 5 H(+)(in) = a ubiquinol + NAD(+) + 4 H(+)(out). Its function is as follows. Core subunit of the mitochondrial membrane respiratory chain NADH dehydrogenase (Complex I) that is believed to belong to the minimal assembly required for catalysis. Complex I functions in the transfer of electrons from NADH to the respiratory chain. The immediate electron acceptor for the enzyme is believed to be ubiquinone. The polypeptide is NADH-ubiquinone oxidoreductase chain 3 (ND3) (Branchiostoma lanceolatum (Common lancelet)).